Reading from the N-terminus, the 188-residue chain is Archaetidylinositol phosphate synthase (188 aa).

2 helical membrane-spanning segments follow: residues 20 to 40 (LASL…ITLL) and 51 to 71 (ILAG…GALA). Positions 64, 67, 85, and 89 each coordinate Mg(2+). The Proton acceptor role is filled by aspartate 89. A run of 2 helical transmembrane segments spans residues 96 to 116 (ILFG…LTLI) and 147 to 167 (IIII…YLVA).

The protein belongs to the CDP-alcohol phosphatidyltransferase class-I family. Mn(2+) is required as a cofactor. Requires Mg(2+) as cofactor.

It localises to the cell membrane. It carries out the reaction CDP-2,3-bis-O-(phytanyl)-sn-glycerol + 1D-myo-inositol 3-phosphate = saturated 1-archaetidyl-1D-myo-inositol 3-phosphate + CMP + H(+). The protein operates within lipid metabolism; phospholipid metabolism. Its function is as follows. Catalyzes the formation of archaetidylinositol phosphate (AIP) from CDP-archaeol (CDP-ArOH or CDP-2,3-bis-(O-phytanyl)-sn-glycerol) and 1L-myo-inositol 1-phosphate (IP or 1D-myo-inositol 3-phosphate). AIP is a precursor of archaetidyl-myo-inositol (AI), an ether-type inositol phospholipid ubiquitously distributed in archaea membranes and essential for glycolipid biosynthesis in archaea. The chain is Archaetidylinositol phosphate synthase from Pyrococcus horikoshii (strain ATCC 700860 / DSM 12428 / JCM 9974 / NBRC 100139 / OT-3).